A 100-amino-acid chain; its full sequence is Urease subunit gamma (100 aa).

The protein belongs to the urease gamma subunit family. As to quaternary structure, heterotrimer of UreA (gamma), UreB (beta) and UreC (alpha) subunits. Three heterotrimers associate to form the active enzyme.

Its subcellular location is the cytoplasm. The enzyme catalyses urea + 2 H2O + H(+) = hydrogencarbonate + 2 NH4(+). Its pathway is nitrogen metabolism; urea degradation; CO(2) and NH(3) from urea (urease route): step 1/1. This Streptomyces avermitilis (strain ATCC 31267 / DSM 46492 / JCM 5070 / NBRC 14893 / NCIMB 12804 / NRRL 8165 / MA-4680) protein is Urease subunit gamma.